A 256-amino-acid chain; its full sequence is Isoprenyl transferase (256 aa).

The active site involves Asp-33. Residue Asp-33 coordinates Mg(2+). Residues 34-37 (GNGR), Trp-38, Arg-46, His-50, and 78-80 (STE) each bind substrate. Asn-81 acts as the Proton acceptor in catalysis. Substrate is bound by residues Trp-82, Arg-84, Arg-201, and 207–209 (RIS). Glu-220 provides a ligand contact to Mg(2+).

It belongs to the UPP synthase family. Homodimer. Requires Mg(2+) as cofactor.

Its function is as follows. Catalyzes the condensation of isopentenyl diphosphate (IPP) with allylic pyrophosphates generating different type of terpenoids. The chain is Isoprenyl transferase from Staphylococcus epidermidis (strain ATCC 35984 / DSM 28319 / BCRC 17069 / CCUG 31568 / BM 3577 / RP62A).